Here is a 20-residue protein sequence, read N- to C-terminus: Dentinal fluid transport-stimulating peptide (20 aa).

A disordered region spans residues 1-20 (GVIAWELQHNEPGRKDSTAG). Basic and acidic residues predominate over residues 8–20 (QHNEPGRKDSTAG).

Functionally, this peptide stimulates the transport of dentinal fluid, which is important for the prevention of dental caries. This is Dentinal fluid transport-stimulating peptide from Rattus norvegicus (Rat).